Consider the following 785-residue polypeptide: Cadherin-7 (785 aa).

Positions 1 to 27 (MKLGKVELCRFLQLIALFLCFSGMNQA) are cleaved as a signal peptide. A propeptide spanning residues 28 to 47 (ELPRSRSKPYFQLGRSRTKR) is cleaved from the precursor. Topologically, residues 28-607 (ELPRSRSKPY…AYILPAGLST (580 aa)) are extracellular. Cadherin domains lie at 49-153 (WVWN…EPKF), 154-262 (LDGP…PPRF), 263-377 (PRRS…PPVF), 378-482 (SSPL…APEF), and 482-599 (FAMD…AEAY). Asparagine 449 and asparagine 530 each carry an N-linked (GlcNAc...) asparagine glycan. Residues 608-628 (GALIAILACVLTLLVLILLIV) form a helical membrane-spanning segment. Residues 629-785 (TMKRRKKEPL…YGNGQESLYS (157 aa)) lie on the Cytoplasmic side of the membrane.

The protein localises to the cell membrane. In terms of biological role, cadherins are calcium-dependent cell adhesion proteins. They preferentially interact with themselves in a homophilic manner in connecting cells; cadherins may thus contribute to the sorting of heterogeneous cell types. This is Cadherin-7 (Cdh7) from Rattus norvegicus (Rat).